A 100-amino-acid polypeptide reads, in one-letter code: Small ribosomal subunit protein uS14c (100 aa).

The segment covering 28 to 45 (KKEIKKVPSLSEKMEIHG) has biased composition (basic and acidic residues). Residues 28–59 (KKEIKKVPSLSEKMEIHGKLQSPPRNSAPTRL) are disordered.

The protein belongs to the universal ribosomal protein uS14 family. Part of the 30S ribosomal subunit.

The protein localises to the plastid. The protein resides in the chloroplast. Functionally, binds 16S rRNA, required for the assembly of 30S particles. This chain is Small ribosomal subunit protein uS14c, found in Nandina domestica (Heavenly bamboo).